Here is a 241-residue protein sequence, read N- to C-terminus: MSKIVLLIVVIVGVLGSLAVALPQRPYTQPLIYYPPPPTPPRIYRARRQVLGGSLTSNPSGGADARLDLSKAVGTPDHHVIGQVFAAGNTQTKPVSTPVTSGATLGYNNHGHGLELTKTHTPGVRDSFQQTATANLFNNGVHNLDAKAFASQNQLANGFKFDRNGAALDYSHIKGHGATLTHANIPGLGKQLELGGRANLWQSQDRNTRLDLGSTASKWTSGPFKGQTDLGANLGLSHYFG.

The first 21 residues, 1–21, serve as a signal peptide directing secretion; that stretch reads MSKIVLLIVVIVGVLGSLAVA. A propeptide spanning residues 22-23 is cleaved from the precursor; that stretch reads LP. Gln24 carries the pyrrolidone carboxylic acid modification. Thr39 is a glycosylation site (O-linked (GalNAc...) threonine). Residue Ser127 is modified to Phosphoserine.

This sequence belongs to the attacin/sarcotoxin-2 family. Hemolymph (at protein level).

It is found in the secreted. Has antimicrobial activity in synergy with other peptides. Strongest activity observed against E.cloacae. The sequence is that of Attacin-C from Drosophila melanogaster (Fruit fly).